Consider the following 248-residue polypeptide: Pulmonary surfactant-associated protein A (248 aa).

A signal peptide spans 1 to 20 (MWLCPLALTLTLMAASGAAC). The Collagen-like domain occupies 31–100 (GIPGTPGSHG…PGERGPPGLP (70 aa)). The interval 33–100 (PGTPGSHGLP…PGERGPPGLP (68 aa)) is disordered. The span at 42–51 (PGRDGRDGVK) shows a compositional bias: basic and acidic residues. Residues 54–65 (PGPPGPMGPPGD) are compositionally biased toward pro residues. A C-type lectin domain is found at 134-247 (IGGKVFSTNG…CLYNRLTICE (114 aa)). Disulfide bonds link Cys155-Cys246 and Cys224-Cys238. Asn207 is a glycosylation site (N-linked (GlcNAc...) asparagine). Ca(2+) contacts are provided by Glu215, Ala217, Asn234, and Asp235.

The protein belongs to the SFTPA family. As to quaternary structure, oligomeric complex of 6 set of homotrimers.

The protein resides in the secreted. The protein localises to the extracellular space. Its subcellular location is the extracellular matrix. It localises to the surface film. Its function is as follows. In presence of calcium ions, it binds to surfactant phospholipids and contributes to lower the surface tension at the air-liquid interface in the alveoli of the mammalian lung and is essential for normal respiration. Enhances the expression of MYO18A/SP-R210 on alveolar macrophages. The chain is Pulmonary surfactant-associated protein A (SFTPA1) from Macaca mulatta (Rhesus macaque).